A 362-amino-acid chain; its full sequence is MHFLQNAFVAATMGAAPAAATPLEKRSCTFTSASAAKSGKSSCSTITFDNIAVPAGETLDLTGLKKGTTVIFEGETTFGYKEWKGPLISMSGTDITVKQASGAKINCDGARWWDGKGSNGGKTKPKFFQAHKLDESSITGLKIYNTPVQGFSILADHLTITDVTIDDSAGTSKGHNTDAFDIGQSTYITIDGATVYNQDDCLAINSGEHITFTNGYCDGGHGLSIGSIGGRSDNTVNDVTISNSKVVNSQNGVRIKTIYGKTGTVENVKFEDITLSDISKYGIVVEQDYENGSPTGTPTNGVKVEDITFKKVTGSVKSSGTDIYILCGSGRCSNWTWSGVDVTGGKKSSKCKNVPSGASCSD.

Positions 1–20 are cleaved as a signal peptide; that stretch reads MHFLQNAFVAATMGAAPAAA. A propeptide spanning residues 21 to 25 is cleaved from the precursor; the sequence is TPLEK. C28 and C43 are oxidised to a cystine. PbH1 repeat units lie at residues 155–184, 185–206, 207–227, 236–257, 265–287, and 299–344; these read ADHL…DIGQ, STYI…AINS, GEHI…SIGS, VNDV…RIKT, VENV…VVEQ, and TNGV…DVTG. D199 serves as the catalytic Proton donor. C201 and C217 are oxidised to a cystine. The active site involves H221. An intrachain disulfide couples C327 to C332. N334 is a glycosylation site (N-linked (GlcNAc...) asparagine). C351 and C360 are disulfide-bonded.

Belongs to the glycosyl hydrolase 28 family.

Its subcellular location is the secreted. The catalysed reaction is (1,4-alpha-D-galacturonosyl)n+m + H2O = (1,4-alpha-D-galacturonosyl)n + (1,4-alpha-D-galacturonosyl)m.. Its function is as follows. Involved in maceration and soft-rotting of plant tissue. Hydrolyzes the 1,4-alpha glycosidic bonds of de-esterified pectate in the smooth region of the plant cell wall. This is Probable endopolygalacturonase B (pgaB) from Aspergillus kawachii (White koji mold).